A 64-amino-acid polypeptide reads, in one-letter code: Chromatin protein Cren7 (64 aa).

This sequence belongs to the Cren7 family. In terms of assembly, monomer. Post-translationally, methylated at multiple sites, to varying extents.

The protein resides in the chromosome. It localises to the cytoplasm. Functionally, a chromatin protein, binds double-stranded DNA without sequence specificity. Constrains negative DNA supercoils. The chain is Chromatin protein Cren7 from Aeropyrum pernix (strain ATCC 700893 / DSM 11879 / JCM 9820 / NBRC 100138 / K1).